A 7158-amino-acid polypeptide reads, in one-letter code: Twitchin (7158 aa).

Ig-like domains are found at residues 5–97 and 111–204; these read PRFT…INLN and PSFV…LALN. 2 disulfides stabilise this stretch: C25–C81 and C132–C188. Disordered regions lie at residues 204-381, 473-639, 658-732, and 763-955; these read NFEE…PIVL, EEEL…TKLR, KKVK…DSMA, and EVKE…IDMR. Positions 220–238 are enriched in low complexity; sequence TASPRPSSRGPGSRPSSPK. Composition is skewed to basic and acidic residues over residues 242 to 259 and 279 to 291; these read KSRE…EGSP and ESRR…KMEV. Low complexity-rich tracts occupy residues 319-340 and 347-368; these read SPST…RKGS and SGTT…ASSD. The 90-residue stretch at 377 to 466 folds into the Ig-like 3 domain; that stretch reads PPIVLEASRS…GEGQSSAMVK (90 aa). A compositionally biased stretch (basic residues) spans 504–513; that stretch reads RVARRSKSKS. The segment covering 514-523 has biased composition (low complexity); that stretch reads KSPAPQAKKS. 2 stretches are compositionally biased toward basic and acidic residues: residues 529–540 and 601–618; these read GRQEASEVEHKR and KTDS…DTLL. Positions 620-630 are enriched in low complexity; it reads KTTTSTKNESS. Residues 718–764 form a Kelch 1 repeat; it reads VKSGAGGLEKSDSMASLKKLDLKKGKIDDNSDGAFKVQLKKVVKKEV. Composition is skewed to basic and acidic residues over residues 763-813, 837-850, 885-897, and 917-955; these read EVKE…DKPK, KEVE…ELKA, KAHD…EGIK, and SESR…IDMR. The region spanning 980 to 1072 is the Ig-like 4 domain; the sequence is PKIVEVPENV…DSADVKLLVT (93 aa). Residues 1088–1118 form a disordered region; it reads SQAGFQKDGEGGGAGGGGGEKKPMTEAERRQ. Positions 1106-1118 are enriched in basic and acidic residues; sequence GEKKPMTEAERRQ. Ig-like domains follow at residues 1122-1213, 1217-1306, and 1312-1398; these read PGKK…AQLT, PPMK…SKVQ, and PRHT…AQLI. The cysteines at positions 1150 and 1201 are disulfide-linked. Fibronectin type-III domains are found at residues 1598-1690, 1696-1791, 1891-1988, 1994-2087, 2189-2282, 2288-2383, 2483-2576, and 2579-2675; these read PKGP…AKNP, KPKN…MKAK, PPKG…IKDP, KPGR…AKPK, PNGP…AKNP, KTGT…AKPR, PLGP…AKNP, and VPGK…AKPR. The Kelch 2 repeat unit spans residues 2014–2058; it reads PPHKDGGAPIEEYIVEVRDPDTKEWKEVKRVPDTNASISGLKEGK. An Ig-like 8 domain is found at 2086–2181; that stretch reads PKFIPAWLKH…GADEEKANLT (96 aa). The Kelch 3 repeat unit spans residues 2207-2253; sequence WKPPDDDGGEPIEYYEVEKLDTATGRWVPCAKVKDTKAHIDGLKKGQ. A compositionally biased stretch (basic and acidic residues) spans 2266–2287; that stretch reads GASDALSTDKDTKAKNPYDEPG. The tract at residues 2266 to 2295 is disordered; it reads GASDALSTDKDTKAKNPYDEPGKTGTPDVV. A Kelch 4 repeat occupies 2502 to 2547; the sequence is KVPEDDGGAPIDHYEIEKMDLATGRWVPCGRSETTKTTVPNLQPGH. The Ig-like 9 domain maps to 2679–2763; it reads PRIHREDLSD…TNINGTDSVT (85 aa). Fibronectin type-III domains follow at residues 2775–2868 and 2874–2968; these read PKGP…AKNP and RPGR…AKPR. The stretch at 2793–2839 is one Kelch 5 repeat; the sequence is WKPPEDDGGEPIEFYEIEKMNTKDGIWVPCGRSGDTHFTVDSLNKGD. Residues 2849–2901 form a disordered region; sequence NSEGPSDPLETETDILAKNPFDRPDRPGRPEPTDWDSDHVDLKWDPPLSDGGA. Basic and acidic residues predominate over residues 2868–2892; sequence PFDRPDRPGRPEPTDWDSDHVDLKW. Residues 2972–3062 form the Ig-like 10 domain; it reads PHIDRDALKN…GEDEATVKIN (91 aa). Fibronectin type-III domains lie at 3070-3165 and 3171-3265; these read PNGP…AKDP and KTNA…AKAR. The Kelch 6 repeat unit spans residues 3089–3134; it reads RAPDDDGGIPIENYVIEKYDTASGRWVPAAKVAGDKTTAVVDGLIP. Residues 3268-3358 enclose the Ig-like 11 domain; it reads PPVIDRNSIQ…GTDTAEVKVT (91 aa). 2 consecutive Fibronectin type-III domains span residues 3365-3459 and 3465-3559; these read SPRG…AKDP and KPGT…AKPR. The Kelch 7 repeat unit spans residues 3384–3430; sequence WKEPEDDGGAEISHYVIEKQDAATGRWTACGESKDTNFHVDDLTQGH. The Ig-like 12 domain maps to 3563–3653; the sequence is PKINRDMFVA…GKDEHEVDVN (91 aa). Fibronectin type-III domains follow at residues 3661-3753, 3759-3853, 3954-4047, 4053-4146, 4246-4340, and 4346-4440; these read PEGP…AKNP, APTD…AKPR, PEGP…AKNQ, PVDK…TKAR, PEGP…AKDP, and KPGR…TAKP. One copy of the Kelch 8 repeat lies at 3972–4018; it reads WKPPTDNGGTDVLHYIVEKMDTSRGTWQEVGTFPDCTAKVNKLVPGK. 2 Kelch repeats span residues 4265 to 4310 and 4365 to 4410; these read KPPK…LTEG and DPPR…RVQK. An Ig-like 13 domain is found at 4445 to 4531; the sequence is PKFDLDLDGK…GEAEANIKIT (87 aa). Fibronectin type-III domains follow at residues 4538 to 4631, 4637 to 4733, 4739 to 4834, 4936 to 5028, 5034 to 5129, 5231 to 5326, 5333 to 5427, and 5430 to 5528; these read APEN…IKDP, APST…CRPY, APDA…IEEQ, PTGP…AKNP, APGQ…ADNA, SPQH…VAKY, QPEA…LKSR, and PPGP…IQES. Residues 4557-4602 form a Kelch 11 repeat; sequence DAPKDDGGAEIAGYKIEYQEVGSQIWDKVPGLISGTAYTVRGLEHG. The stretch at 5287 to 5335 is one Kelch 12 repeat; sequence LNYTVGGLIKDNRYRFRVRAETQYGVSEPCELADVVVAKYQFEVPNQPE. Positions 5533–5621 constitute an Ig-like 14 domain; sequence PQIVVKPEDT…GSDTATANLV (89 aa). 2 consecutive Fibronectin type-III domains span residues 5723–5817 and 5823–5919; these read PQGP…ARLP and SPLN…ASGS. One copy of the Kelch 13 repeat lies at 5742–5787; the sequence is RPPVTDGGSKITSYVVEKRDLSKDEWVTVTSNVKDMNYIVTGLFEN. Ig-like domains follow at residues 5923 to 6011 and 6016 to 6107; these read PKIV…ANLR and PRVF…VNVT. The cysteines at positions 5944 and 5995 are disulfide-linked. Positions 6114–6207 constitute a Fibronectin type-III 31 domain; it reads PPRFPIIENI…PTAPVLIPGD (94 aa). Residues 6261–6516 enclose the Protein kinase domain; that stretch reads YDIHEELGTG…IHQALEHPWL (256 aa). Residues 6267-6275 and K6290 each bind ATP; that span reads LGTGAFGVV. The active-site Proton acceptor is the D6382. Residues 6517-6581 form a C-terminal regulatory domain (CDR) region; that stretch reads TPGNAPGRDS…SIRDAFWDRS (65 aa). Ig-like domains are found at residues 6585–6673, 6696–6795, 6863–6952, 6958–7059, and 7067–7149; these read PRFI…VFLN, PRVE…CVLT, PSFT…ATLT, PLLN…ASLV, and PPVT…KAIA.

The protein belongs to the protein kinase superfamily. CAMK Ser/Thr protein kinase family. May interact (via protein kinase and CRD domains) with mak-1 (via protein kinase domain). The cofactor is Mg(2+). Post-translationally, phosphorylated by mak-1 on the protein kinase domain and/or CDR domain in vitro. In terms of tissue distribution, expressed in body wall, anal, vulval, and pharyngeal muscles (at protein level).

It is found in the cytoplasm. Its subcellular location is the myofibril. The protein localises to the sarcomere. The protein resides in the a band. It catalyses the reaction L-seryl-[protein] + ATP = O-phospho-L-seryl-[protein] + ADP + H(+). It carries out the reaction L-threonyl-[protein] + ATP = O-phospho-L-threonyl-[protein] + ADP + H(+). Its activity is regulated as follows. Forces generated by the contraction/relaxation cycles of muscle activity separate the regulatory domain from the catalytic core, activating the enzyme. At rest, the kinase domain is in a closed conformation. The active site is occupied by the autoinhibitory region (CDR), which makes extensive contact with the catalytic site, blocking substrate binding. At low forces the regulatory tail will unravel reversibly and expose the active site to its substrates, potentially stabilized by binding of Ca/CALM. At high forces the kinase begins to unfold and the integrity of the active site is disrupted. In terms of biological role, regulator of muscle contraction and relaxation. Senses mechanical strain that occurs during muscle activity by unfolding in clearly resolvable steps at differing forces. Plays a role in the organization of sarcomeres in body wall muscles. The protein is Twitchin of Caenorhabditis elegans.